The primary structure comprises 384 residues: Probable intron-encoded endonuclease Cox1-I1b (384 aa).

Belongs to the LAGLIDADG endonuclease family.

It localises to the mitochondrion. In terms of biological role, probable mitochondrial DNA endonuclease involved in intron homing. The polypeptide is Probable intron-encoded endonuclease Cox1-I1b (cox1-I1b) (Schizosaccharomyces pombe (strain 972 / ATCC 24843) (Fission yeast)).